A 537-amino-acid polypeptide reads, in one-letter code: MTEDIMATSYPTFLTTPYLPMKLLMNLTNDTEDICVFDEGFKFLLLPVSYSAVFMVGLPLNIAAMWIFIAKMRPWNPTTVYMFNLALSDTLYVLSLPTLVYYYADKNNWPFGEVLCKLVRFLFYANLYSSILFLTCISVHRYRGVCHPITSLRRMNAKHAYVICALVWLSVTLCLVPNLIFVTVSPKVKNTICHDTTRPEDFARYVEYSTAIMCLLFGIPCLIIAGCYGLMTRELMKPIVSGNQQTLPSYKKRSIKTIIFVMIAFAICFMPFHITRTLYYYARLLGIKCYALNVINVTYKVTRPLASANSCIDPILYFLANDRYRRRLIRTVRRRSSVPNRRCMHTNHPQTEPHMTAGPLPVISAEEIPSNGSMVRDENGEGSREHRVEWTDTKEINQMMNRRSTIKRNSTDKNDMKENRHGENYLPYVEVVEKEDYETKRENRKTTEQSSKTNAEQDELQTQIDSRLKRGKWQLSSKKGAAQENEKGHMEPSFEGEGTSTWNLLTPKMYGKKDRLAKNVEEVGYGKEKELQNFPKA.

Topologically, residues 1-49 (MTEDIMATSYPTFLTTPYLPMKLLMNLTNDTEDICVFDEGFKFLLLPVS) are extracellular. 2 N-linked (GlcNAc...) asparagine glycosylation sites follow: Asn-26 and Asn-29. The helical transmembrane segment at 50–70 (YSAVFMVGLPLNIAAMWIFIA) threads the bilayer. The Cytoplasmic portion of the chain corresponds to 71–79 (KMRPWNPTT). A helical transmembrane segment spans residues 80-100 (VYMFNLALSDTLYVLSLPTLV). Over 101 to 118 (YYYADKNNWPFGEVLCKL) the chain is Extracellular. A disulfide bridge connects residues Cys-116 and Cys-193. The chain crosses the membrane as a helical span at residues 119–139 (VRFLFYANLYSSILFLTCISV). The Cytoplasmic portion of the chain corresponds to 140–161 (HRYRGVCHPITSLRRMNAKHAY). The helical transmembrane segment at 162–182 (VICALVWLSVTLCLVPNLIFV) threads the bilayer. Over 183 to 210 (TVSPKVKNTICHDTTRPEDFARYVEYST) the chain is Extracellular. A helical membrane pass occupies residues 211 to 231 (AIMCLLFGIPCLIIAGCYGLM). The Cytoplasmic segment spans residues 232–254 (TRELMKPIVSGNQQTLPSYKKRS). The chain crosses the membrane as a helical span at residues 255–275 (IKTIIFVMIAFAICFMPFHIT). Topologically, residues 276–292 (RTLYYYARLLGIKCYAL) are extracellular. A helical membrane pass occupies residues 293–316 (NVINVTYKVTRPLASANSCIDPIL). The Cytoplasmic portion of the chain corresponds to 317–537 (YFLANDRYRR…EKELQNFPKA (221 aa)). Residues 401–505 (NRRSTIKRNS…GEGTSTWNLL (105 aa)) form a disordered region. 2 stretches are compositionally biased toward basic and acidic residues: residues 409–423 (NSTD…RHGE) and 431–447 (VVEK…RKTT). Over residues 448–465 (EQSSKTNAEQDELQTQID) the composition is skewed to polar residues.

The protein belongs to the G-protein coupled receptor 1 family.

The protein localises to the cell membrane. In terms of biological role, receptor for extracellular ATP, UTP, CTP, GTP and ITP. The activity of this receptor is mediated by G proteins which activate a phosphatidylinositol-calcium second messenger system. May play a key role in the early development of neural tissue. The protein is P2Y purinoceptor 4 (p2ry4) of Xenopus laevis (African clawed frog).